The sequence spans 143 residues: MRHYEIVFMVHPDQSDQVPGMIQRYSTVITQSGGQIHRIEDWGRRQLAYAINKLHKAHYVLLNVEAPQNAINELETNFRFNDAVMRNLIKRMNHAVTEESPIIKMKDERREVVELTTSGSEDNQKDHHKEDLDKKTDEFSEEN.

Residues 100-143 (SPIIKMKDERREVVELTTSGSEDNQKDHHKEDLDKKTDEFSEEN) form a disordered region. Basic and acidic residues-rich tracts occupy residues 104–113 (KMKDERREVV) and 122–143 (DNQKDHHKEDLDKKTDEFSEEN).

This sequence belongs to the bacterial ribosomal protein bS6 family.

Its function is as follows. Binds together with bS18 to 16S ribosomal RNA. The polypeptide is Small ribosomal subunit protein bS6 (Hamiltonella defensa subsp. Acyrthosiphon pisum (strain 5AT)).